An 803-amino-acid polypeptide reads, in one-letter code: H(+)/Cl(-) exchange transporter 7 (803 aa).

Residues 1 to 46 are disordered; that stretch reads MANVSKKVSWSGRDRDDEEGAPLLRRTGQPDEETPLLNGAGPGARQ. At 1–124 the chain is on the cytoplasmic side; that stretch reads MANVSKKVSW…TAFRTVEIKR (124 aa). At Ser9 the chain carries Phosphoserine. 2 consecutive transmembrane segments (helical) span residues 125-157 and 172-195; these read WVIC…YRVI and FSLL…VAFI. A Selectivity filter part_1 motif is present at residues 201 to 205; it reads GSGIP. Ser202 is a binding site for chloride. Residues 204-211 constitute an intramembrane region (helical); that stretch reads IPQIKCFL. 2 helical membrane passes run 221-239 and 245-262; these read RLKT…VVGG and EGPM…ISQG. Positions 243–247 match the Selectivity filter part_2 motif; it reads GKEGP. 2 intramembrane regions (helical) span residues 286–298 and 302–310; these read FVSA…VSAA and PVGGVLFSL. 5 consecutive transmembrane segments (helical) span residues 320 to 339, 373 to 403, 408 to 430, 485 to 505, and 510 to 533; these read FLTW…LNFV, IPVF…FRIR, PCLQ…FVLI, PMTL…TYGL, and GVFI…MSYL. The short motif at 510-514 is the Selectivity filter part_3 element; the sequence is GVFIP. Residue Phe512 participates in chloride binding. The helical intramembrane region spans 543 to 557; sequence GKYALMGAAAQLGGI. Positions 558–560 form an intramembrane region, note=Loop between two helices; it reads VRM. The helical intramembrane region spans 561 to 572; that stretch reads TLSLTVIMMEAT. The segment at residues 573-576 is an intramembrane region (note=Loop between two helices); sequence SNVT. A helical membrane pass occupies residues 577–595; the sequence is YGFPIMLVLMTAKIVGDVF. Over 596–803 the chain is Cytoplasmic; that stretch reads IEGLYDMHIQ…GLEELSLAQT (208 aa). Tyr600 provides a ligand contact to chloride. 2 CBS domains span residues 629-693 and 739-797; these read MSTP…VFVE and MNPS…GLEE. ATP contacts are provided by residues 656–658 and 781–784; these read HNG and TRKD. Ser799 is subject to Phosphoserine.

It belongs to the chloride channel (TC 2.A.49) family. ClC-7/CLCN7 subfamily. In terms of assembly, chloride channel 7 are heteromers of alpha (CLCN7) and beta (OSTM1) subunits. Brain, testis, muscle and kidney.

It is found in the lysosome membrane. It catalyses the reaction 2 chloride(in) + H(+)(out) = 2 chloride(out) + H(+)(in). Slowly voltage-gated channel mediating the exchange of chloride ions against protons. Functions as antiporter and contributes to the acidification of the lysosome lumen and may be involved in maintaining lysosomal pH. The CLC channel family contains both chloride channels and proton-coupled anion transporters that exchange chloride or another anion for protons. The presence of conserved gating glutamate residues is typical for family members that function as antiporters. This chain is H(+)/Cl(-) exchange transporter 7 (Clcn7), found in Rattus norvegicus (Rat).